The chain runs to 820 residues: Leucine--tRNA ligase (820 aa).

Positions 40–51 match the 'HIGH' region motif; the sequence is PYPSGAGLHVGH. Residues 601 to 605 carry the 'KMSKS' region motif; the sequence is KMSKS. Lysine 604 is a binding site for ATP.

It belongs to the class-I aminoacyl-tRNA synthetase family.

It is found in the cytoplasm. The catalysed reaction is tRNA(Leu) + L-leucine + ATP = L-leucyl-tRNA(Leu) + AMP + diphosphate. This Chlamydia pneumoniae (Chlamydophila pneumoniae) protein is Leucine--tRNA ligase.